Reading from the N-terminus, the 73-residue chain is Venom peptide La1 (73 aa).

Residue K73 is modified to Lysine amide.

It belongs to the scorpion La1-like peptide family. Post-translationally, contains 4 disulfide bonds. Expressed by the venom gland.

Its subcellular location is the secreted. Its function is as follows. Not toxic to insect. The chain is Venom peptide La1 from Liocheles australasiae (Dwarf wood scorpion).